A 750-amino-acid chain; its full sequence is Xylosyl- and glucuronyltransferase LARGE2s (750 aa).

At 1 to 10 (MLCPCRGKLK) the chain is on the cytoplasmic side. A helical; Signal-anchor for type II membrane protein membrane pass occupies residues 11–31 (LLVVSLSFVILFTWLYLLVGN). The Lumenal portion of the chain corresponds to 32–750 (SENGRSLLLS…LKYLTAQRNI (719 aa)). N-linked (GlcNAc...) asparagine glycans are attached at residues asparagine 116, asparagine 142, and asparagine 228. A xylosyltransferase activity region spans residues 132–407 (LHVACVCAGH…FLEYDGNLLR (276 aa)). Residues aspartate 236 and aspartate 238 each coordinate Mn(2+). N-linked (GlcNAc...) asparagine glycosylation occurs at asparagine 266. The segment at 408–750 (RELFGCPSQA…LKYLTAQRNI (343 aa)) is glucuronyltransferase activity. Mn(2+)-binding residues include aspartate 557 and aspartate 559.

It in the C-terminal section; belongs to the glycosyltransferase 49 family. This sequence in the N-terminal section; belongs to the glycosyltransferase 8 family. Requires Mn(2+) as cofactor.

Its subcellular location is the golgi apparatus membrane. It catalyses the reaction 3-O-[beta-D-GlcA-(1-&gt;3)-beta-D-Xyl-(1-&gt;4)-Rib-ol-P-Rib-ol-P-3-beta-D-GalNAc-(1-&gt;3)-beta-D-GlcNAc-(1-&gt;4)-(O-6-P-alpha-D-Man)]-Thr-[protein] + UDP-alpha-D-xylose = 3-O-[alpha-D-Xyl-(1-&gt;3)-beta-D-GlcA-(1-&gt;4)-beta-D-Xyl-(1-&gt;4)-Rib-ol-P-Rib-ol-P-3-beta-D-GalNAc-(1-&gt;3)-beta-D-GlcNAc-(1-&gt;4)-(O-6-P-alpha-D-Man)]-Thr-[protein] + UDP + H(+). It carries out the reaction 3-O-{(1-&gt;[3)-alpha-D-Xyl-(1-&gt;3)-beta-D-GlcA-(1-&gt;](n)-4)-beta-D-Xyl-(1-&gt;4)-Rib-ol-P-Rib-ol-P-3-beta-D-GalNAc-(1-&gt;3)-beta-D-GlcNAc-(1-&gt;4)-O-6-P-alpha-D-Man}-L-Thr-[protein] + UDP-alpha-D-glucuronate = 3-O-{beta-D-GlcA-(1-&gt;[3)-alpha-D-Xyl-(1-&gt;3)-beta-D-GlcA-(1-&gt;](n)-4)-beta-D-Xyl-(1-&gt;4)-Rib-ol-P-Rib-ol-P-3-beta-D-GalNAc-(1-&gt;3)-beta-D-GlcNAc-(1-&gt;4)-O-6-P-alpha-D-Man}-L-Thr-[protein] + UDP + H(+). The catalysed reaction is 3-O-{beta-D-GlcA-(1-&gt;[3)-alpha-D-Xyl-(1-&gt;3)-beta-D-GlcA-(1-&gt;](n)-4)-beta-D-Xyl-(1-&gt;4)-Rib-ol-P-Rib-ol-P-3-beta-D-GalNAc-(1-&gt;3)-beta-D-GlcNAc-(1-&gt;4)-O-6-P-alpha-D-Man}-L-Thr-[protein] + UDP-alpha-D-xylose = 3-O-{(1-&gt;[3)-alpha-D-Xyl-(1-&gt;3)-beta-D-GlcA-(1-&gt;](n+1)-4)-beta-D-Xyl-(1-&gt;4)-Rib-ol-P-Rib-ol-P-3-beta-D-GalNAc-(1-&gt;3)-beta-D-GlcNAc-(1-&gt;4)-O-6-P-alpha-D-Man}-L-Thr-[protein] + UDP + H(+). The protein operates within protein modification; protein glycosylation. Bifunctional glycosyltransferase with both alpha-1,3-xylosyltransferase and beta-1,3-glucuronyltransferase activities involved in the maturation of alpha-dystroglycan (DAG1) by glycosylation leading to DAG1 binding to laminin G-like domain-containing extracellular proteins with high affinity and in a phosphorylated-O-mannosyl trisaccharide dependent manner. Elongates the glucuronyl-beta-1,4-xylose-beta disaccharide primer structure by adding repeating units [-3-Xylose-alpha-1,3-GlcA-beta-1-] to produce a heteropolysaccharide. Supports the maturation of DAG1 more effectively than LARGE1. In addition, can modify both heparan sulfate (HS)- and chondroitin/dermatan sulfate (CS/DS)-proteoglycans (PGs), namely GPC4, with a glycosaminoglycan (GAG)-like polysaccharide composed of xylose and glucuronic acid to confer laminin binding. This is Xylosyl- and glucuronyltransferase LARGE2s from Danio rerio (Zebrafish).